Here is a 258-residue protein sequence, read N- to C-terminus: Aspartate/glutamate leucyltransferase (258 aa).

Belongs to the R-transferase family. Bpt subfamily.

It localises to the cytoplasm. It catalyses the reaction N-terminal L-glutamyl-[protein] + L-leucyl-tRNA(Leu) = N-terminal L-leucyl-L-glutamyl-[protein] + tRNA(Leu) + H(+). The catalysed reaction is N-terminal L-aspartyl-[protein] + L-leucyl-tRNA(Leu) = N-terminal L-leucyl-L-aspartyl-[protein] + tRNA(Leu) + H(+). In terms of biological role, functions in the N-end rule pathway of protein degradation where it conjugates Leu from its aminoacyl-tRNA to the N-termini of proteins containing an N-terminal aspartate or glutamate. The sequence is that of Aspartate/glutamate leucyltransferase from Bradyrhizobium sp. (strain BTAi1 / ATCC BAA-1182).